Reading from the N-terminus, the 633-residue chain is Extracellular metalloproteinase 5 (633 aa).

A signal peptide spans 1–21; it reads MHGLLLAAAGLLSLPLHVIAH. Residues 22-245 constitute a propeptide that is removed on maturation; sequence PQPSTNLAGR…HNVVDYVSHA (224 aa). An N-linked (GlcNAc...) asparagine glycan is attached at Asn286. A Zn(2+)-binding site is contributed by His428. The active site involves Glu429. His432 serves as a coordination point for Zn(2+). 2 N-linked (GlcNAc...) asparagine glycosylation sites follow: Asn592 and Asn621.

The protein belongs to the peptidase M36 family. The cofactor is Zn(2+).

It localises to the secreted. Functionally, secreted metalloproteinase probably acting as a virulence factor. This chain is Extracellular metalloproteinase 5 (MEP5), found in Arthroderma benhamiae (Trichophyton mentagrophytes).